The sequence spans 199 residues: Probable thymidylate kinase (199 aa).

9–16 (GIDGCGKT) is a binding site for ATP.

It belongs to the thymidylate kinase family.

It catalyses the reaction dTMP + ATP = dTDP + ADP. The polypeptide is Probable thymidylate kinase (Methanococcus maripaludis (strain C7 / ATCC BAA-1331)).